Reading from the N-terminus, the 366-residue chain is Aminomethyltransferase (366 aa).

Belongs to the GcvT family. In terms of assembly, the glycine cleavage system is composed of four proteins: P, T, L and H.

The catalysed reaction is N(6)-[(R)-S(8)-aminomethyldihydrolipoyl]-L-lysyl-[protein] + (6S)-5,6,7,8-tetrahydrofolate = N(6)-[(R)-dihydrolipoyl]-L-lysyl-[protein] + (6R)-5,10-methylene-5,6,7,8-tetrahydrofolate + NH4(+). In terms of biological role, the glycine cleavage system catalyzes the degradation of glycine. The sequence is that of Aminomethyltransferase from Bordetella avium (strain 197N).